Reading from the N-terminus, the 151-residue chain is MSTAARRRLMRDFKRMQTDPPAGVSASPVPDNVMTWNAVIIGPADTPFEDGTFRLVMHFEEQYPNKPPSVKFISEMFHPNVYATGELCLDILQNRWSPTYDVAAVLTSIQSLLNDPNTGSPANVEASNLYKDNRKEYHKRVRETVEKSWED.

Residues 4–150 enclose the UBC core domain; sequence AARRRLMRDF…VRETVEKSWE (147 aa). The Glycyl thioester intermediate role is filled by Cys88.

This sequence belongs to the ubiquitin-conjugating enzyme family.

The protein localises to the cytoplasm. The protein resides in the nucleus. It catalyses the reaction S-ubiquitinyl-[E1 ubiquitin-activating enzyme]-L-cysteine + [E2 ubiquitin-conjugating enzyme]-L-cysteine = [E1 ubiquitin-activating enzyme]-L-cysteine + S-ubiquitinyl-[E2 ubiquitin-conjugating enzyme]-L-cysteine.. It functions in the pathway protein modification; protein ubiquitination. In terms of biological role, catalyzes the covalent attachment of ubiquitin to other proteins. Plays a role in transcription regulation by catalyzing the monoubiquitination of histone H2B to form H2BK123ub1. H2BK123ub1 gives a specific tag for epigenetic transcriptional activation and is also a prerequisite for H3K4me and H3K79me formation. Also involved in postreplication repair of UV-damaged DNA, in N-end rule-dependent protein degradation and in sporulation. The protein is Ubiquitin-conjugating enzyme E2 2 (mus-8) of Neurospora crassa (strain ATCC 24698 / 74-OR23-1A / CBS 708.71 / DSM 1257 / FGSC 987).